The following is a 379-amino-acid chain: S-adenosylmethionine synthase (379 aa).

His-15 lines the ATP pocket. Asp-17 lines the Mg(2+) pocket. Glu-43 lines the K(+) pocket. L-methionine-binding residues include Glu-56 and Gln-99. Residues 99-109 form a flexible loop region; it reads QSPDITQGVDR. ATP-binding positions include 164-166, 230-231, Asp-239, 245-246, Ala-262, and Lys-266; these read DAK, RF, and RK. Residue Asp-239 coordinates L-methionine. An L-methionine-binding site is contributed by Lys-270.

This sequence belongs to the AdoMet synthase family. As to quaternary structure, homotetramer; dimer of dimers. Mg(2+) serves as cofactor. It depends on K(+) as a cofactor.

The protein localises to the cytoplasm. The enzyme catalyses L-methionine + ATP + H2O = S-adenosyl-L-methionine + phosphate + diphosphate. Its pathway is amino-acid biosynthesis; S-adenosyl-L-methionine biosynthesis; S-adenosyl-L-methionine from L-methionine: step 1/1. Catalyzes the formation of S-adenosylmethionine (AdoMet) from methionine and ATP. The overall synthetic reaction is composed of two sequential steps, AdoMet formation and the subsequent tripolyphosphate hydrolysis which occurs prior to release of AdoMet from the enzyme. This is S-adenosylmethionine synthase from Buchnera aphidicola subsp. Schizaphis graminum (strain Sg).